The sequence spans 112 residues: MTGKTVTRADLAESVFRKVGLSRTESAELVETVIDEICNAIVRGETVKLSSFATFQVRDKNERIGRNPKTGEEVPISPRRVMTFKASNVLKTRILKAHVSRKVKLKPQNPAP.

The protein belongs to the bacterial histone-like protein family. Heterodimer of an alpha and a beta chain.

In terms of biological role, this protein is one of the two subunits of integration host factor, a specific DNA-binding protein that functions in genetic recombination as well as in transcriptional and translational control. This chain is Integration host factor subunit alpha, found in Rhizobium etli (strain CIAT 652).